We begin with the raw amino-acid sequence, 239 residues long: UPF0173 metal-dependent hydrolase Dvul_0081 (239 aa).

It belongs to the UPF0173 family.

This is UPF0173 metal-dependent hydrolase Dvul_0081 from Nitratidesulfovibrio vulgaris (strain DP4) (Desulfovibrio vulgaris).